The following is a 303-amino-acid chain: CDAN1-interacting nuclease 1 (303 aa).

The protein resides in the nucleus. Its subcellular location is the cytoplasm. Functionally, may play a role in erythroid cell differentiation. The sequence is that of CDAN1-interacting nuclease 1 from Xenopus laevis (African clawed frog).